The primary structure comprises 257 residues: Putative hydro-lyase Bcep18194_B2576 (257 aa).

This sequence belongs to the D-glutamate cyclase family.

This is Putative hydro-lyase Bcep18194_B2576 from Burkholderia lata (strain ATCC 17760 / DSM 23089 / LMG 22485 / NCIMB 9086 / R18194 / 383).